The chain runs to 133 residues: Profilin-2 (133 aa).

The cysteines at positions 13 and 117 are disulfide-linked. The Involved in PIP2 interaction motif lies at 83–99 (AVIRGKKGSGGITIKKT). Residue T113 is modified to Phosphothreonine.

This sequence belongs to the profilin family. In terms of assembly, occurs in many kinds of cells as a complex with monomeric actin in a 1:1 ratio. In terms of processing, phosphorylated by MAP kinases.

Its subcellular location is the cytoplasm. It localises to the cytoskeleton. Functionally, binds to actin and affects the structure of the cytoskeleton. At high concentrations, profilin prevents the polymerization of actin, whereas it enhances it at low concentrations. The protein is Profilin-2 of Betula pendula (European white birch).